A 337-amino-acid polypeptide reads, in one-letter code: Protein ABHD13 (337 aa).

A helical; Signal-anchor for type II membrane protein transmembrane segment spans residues 37 to 57 (FHLYGGIILLLLIFISIAGIL). Residues Ser193, Asp268, and His298 each act as charge relay system in the active site. Asn299 is a glycosylation site (N-linked (GlcNAc...) asparagine).

Belongs to the serine esterase family.

Its subcellular location is the membrane. This Homo sapiens (Human) protein is Protein ABHD13.